The primary structure comprises 352 residues: Zinc finger CCCH domain-containing protein 42 (352 aa).

The RRM domain occupies 36–114; it reads AYVYVGGIPF…RTIKVDHCGA (79 aa). C3H1-type zinc fingers lie at residues 130-157 and 180-207; these read REAR…HDEK and REGR…HDEK. The tract at residues 156–179 is disordered; the sequence is EKRAANTGWGHEEDRSSKWDHDKN. 3 stretches are compositionally biased toward basic and acidic residues: residues 210–230, 243–296, and 304–352; these read ATTG…DKLN, GDFK…RSGR, and RHND…DRRR. The segment at 210–352 is disordered; that stretch reads ATTGWGHEED…DSLRREDRRR (143 aa). Positions 319–348 form a coiled coil; it reads RAQDWEKRKAESRRDRNDREEKDRDSLRRE.

The protein is Zinc finger CCCH domain-containing protein 42 of Arabidopsis thaliana (Mouse-ear cress).